The primary structure comprises 136 residues: Ribulose bisphosphate carboxylase small subunit, chloroplastic 1 (136 aa).

A chloroplast-targeting transit peptide spans 1–13 (NTDITSNGERVKC).

It belongs to the RuBisCO small chain family. In terms of assembly, heterohexadecamer of 8 large and 8 small subunits.

The protein resides in the plastid. It is found in the chloroplast. In terms of biological role, ruBisCO catalyzes two reactions: the carboxylation of D-ribulose 1,5-bisphosphate, the primary event in carbon dioxide fixation, as well as the oxidative fragmentation of the pentose substrate. Both reactions occur simultaneously and in competition at the same active site. Although the small subunit is not catalytic it is essential for maximal activity. The protein is Ribulose bisphosphate carboxylase small subunit, chloroplastic 1 of Pisum sativum (Garden pea).